We begin with the raw amino-acid sequence, 202 residues long: LexA repressor (202 aa).

The H-T-H motif DNA-binding region spans 28 to 48; that stretch reads RAEIASRLGFRSPNAAEEHLK. Catalysis depends on for autocatalytic cleavage activity residues Ser-119 and Lys-156.

This sequence belongs to the peptidase S24 family. Homodimer.

It carries out the reaction Hydrolysis of Ala-|-Gly bond in repressor LexA.. Its function is as follows. Represses a number of genes involved in the response to DNA damage (SOS response), including recA and lexA. Binds to the 16 bp palindromic sequence 5'-CTGTATATATATACAG-3'. In the presence of single-stranded DNA, RecA interacts with LexA causing an autocatalytic cleavage which disrupts the DNA-binding part of LexA, leading to derepression of the SOS regulon and eventually DNA repair. The protein is LexA repressor of Sodalis glossinidius (strain morsitans).